We begin with the raw amino-acid sequence, 187 residues long: Photosystem I assembly protein Ycf4 (187 aa).

The next 2 membrane-spanning stretches (helical) occupy residues 21-43 (LSNYWWAITIGLGSSGFILAGIS) and 69-91 (LLYGTIGFLLDIYLWLLILWNVG).

Belongs to the Ycf4 family.

Its subcellular location is the plastid. The protein localises to the cyanelle thylakoid membrane. Functionally, seems to be required for the assembly of the photosystem I complex. The chain is Photosystem I assembly protein Ycf4 from Cyanophora paradoxa.